The sequence spans 253 residues: Hydroxyacylglutathione hydrolase (253 aa).

Residues His-54, His-56, Asp-58, His-59, His-112, Asp-131, and His-169 each coordinate Zn(2+).

Belongs to the metallo-beta-lactamase superfamily. Glyoxalase II family. As to quaternary structure, monomer. The cofactor is Zn(2+).

The catalysed reaction is an S-(2-hydroxyacyl)glutathione + H2O = a 2-hydroxy carboxylate + glutathione + H(+). It functions in the pathway secondary metabolite metabolism; methylglyoxal degradation; (R)-lactate from methylglyoxal: step 2/2. Its function is as follows. Thiolesterase that catalyzes the hydrolysis of S-D-lactoyl-glutathione to form glutathione and D-lactic acid. The sequence is that of Hydroxyacylglutathione hydrolase from Bartonella henselae (strain ATCC 49882 / DSM 28221 / CCUG 30454 / Houston 1) (Rochalimaea henselae).